Consider the following 680-residue polypeptide: DNA ligase (680 aa).

NAD(+) contacts are provided by residues 44–48 (DYIYD), 94–95 (SL), and glutamate 124. Lysine 126 functions as the N6-AMP-lysine intermediate in the catalytic mechanism. Arginine 147, glutamate 181, lysine 297, and lysine 321 together coordinate NAD(+). Positions 415, 418, 433, and 438 each coordinate Zn(2+). The region spanning 598–680 (DENSFFYGKK…VDEQVKEDGK (83 aa)) is the BRCT domain.

The protein belongs to the NAD-dependent DNA ligase family. LigA subfamily. Requires Mg(2+) as cofactor. Mn(2+) serves as cofactor.

It carries out the reaction NAD(+) + (deoxyribonucleotide)n-3'-hydroxyl + 5'-phospho-(deoxyribonucleotide)m = (deoxyribonucleotide)n+m + AMP + beta-nicotinamide D-nucleotide.. DNA ligase that catalyzes the formation of phosphodiester linkages between 5'-phosphoryl and 3'-hydroxyl groups in double-stranded DNA using NAD as a coenzyme and as the energy source for the reaction. It is essential for DNA replication and repair of damaged DNA. The polypeptide is DNA ligase (Leuconostoc mesenteroides subsp. mesenteroides (strain ATCC 8293 / DSM 20343 / BCRC 11652 / CCM 1803 / JCM 6124 / NCDO 523 / NBRC 100496 / NCIMB 8023 / NCTC 12954 / NRRL B-1118 / 37Y)).